Consider the following 528-residue polypeptide: Tyrosine--tRNA ligase, cytoplasmic (528 aa).

An L-tyrosine-binding site is contributed by tyrosine 39. A 'HIGH' region motif is present at residues 44-52 (TTGKPHVAY). Tyrosine 166, glutamine 170, aspartate 173, and glutamine 188 together coordinate L-tyrosine. A 'KMSKS' region motif is present at residues 222 to 226 (KMSSS). Residues 242-247 (KKKLKK) carry the Nuclear localization signal motif. Positions 335–364 (KLSNDAYPGASKQKTVPKGSTKNSGPEEID) are disordered. The span at 346–358 (KQKTVPKGSTKNS) shows a compositional bias: polar residues. In terms of domain architecture, tRNA-binding spans 364 to 468 (DPSLLDLRVG…TGSAPGERIY (105 aa)).

The protein belongs to the class-I aminoacyl-tRNA synthetase family. In terms of assembly, homodimer.

The protein resides in the cytoplasm. Its subcellular location is the nucleus. The catalysed reaction is tRNA(Tyr) + L-tyrosine + ATP = L-tyrosyl-tRNA(Tyr) + AMP + diphosphate + H(+). Catalyzes the attachment of tyrosine to tRNA(Tyr) in a two-step reaction: tyrosine is first activated by ATP to form Tyr-AMP and then transferred to the acceptor end of tRNA(Tyr). The polypeptide is Tyrosine--tRNA ligase, cytoplasmic (yars1) (Xenopus tropicalis (Western clawed frog)).